An 87-amino-acid chain; its full sequence is Small ribosomal subunit protein uS15c (87 aa).

The protein belongs to the universal ribosomal protein uS15 family. Part of the 30S ribosomal subunit.

Its subcellular location is the plastid. It is found in the chloroplast. The protein is Small ribosomal subunit protein uS15c (rps15) of Atropa belladonna (Belladonna).